Here is a 775-residue protein sequence, read N- to C-terminus: 5-methyltetrahydropteroyltriglutamate--homocysteine methyltransferase (775 aa).

5-methyltetrahydropteroyltri-L-glutamate contacts are provided by residues 15–18 (RELK) and lysine 118. Residues 448-450 (IGS) and glutamate 501 each bind L-homocysteine. L-methionine contacts are provided by residues 448 to 450 (IGS) and glutamate 501. 5-methyltetrahydropteroyltri-L-glutamate contacts are provided by residues 532-533 (RC) and tryptophan 578. Aspartate 616 is a binding site for L-homocysteine. Aspartate 616 serves as a coordination point for L-methionine. Residue glutamate 622 participates in 5-methyltetrahydropteroyltri-L-glutamate binding. Zn(2+) contacts are provided by histidine 658, cysteine 660, and glutamate 682. The active-site Proton donor is histidine 711. Cysteine 743 is a Zn(2+) binding site.

It belongs to the vitamin-B12 independent methionine synthase family. The cofactor is Zn(2+).

It catalyses the reaction 5-methyltetrahydropteroyltri-L-glutamate + L-homocysteine = tetrahydropteroyltri-L-glutamate + L-methionine. The protein operates within amino-acid biosynthesis; L-methionine biosynthesis via de novo pathway; L-methionine from L-homocysteine (MetE route): step 1/1. Catalyzes the transfer of a methyl group from 5-methyltetrahydrofolate to homocysteine resulting in methionine formation. In Cytophaga hutchinsonii (strain ATCC 33406 / DSM 1761 / CIP 103989 / NBRC 15051 / NCIMB 9469 / D465), this protein is 5-methyltetrahydropteroyltriglutamate--homocysteine methyltransferase.